The following is a 516-amino-acid chain: GMP synthase [glutamine-hydrolyzing] (516 aa).

The Glutamine amidotransferase type-1 domain occupies 6–199; the sequence is KVLILDFGSQ…LFEIAGLTSG (194 aa). Cys-83 (nucleophile) is an active-site residue. Active-site residues include His-173 and Glu-175. The region spanning 200 to 391 is the GMPS ATP-PPase domain; that stretch reads WTMSSFLETE…LGMPDFIIWR (192 aa). 227–233 contacts ATP; the sequence is SGGVDST.

Homodimer.

The enzyme catalyses XMP + L-glutamine + ATP + H2O = GMP + L-glutamate + AMP + diphosphate + 2 H(+). It functions in the pathway purine metabolism; GMP biosynthesis; GMP from XMP (L-Gln route): step 1/1. Functionally, catalyzes the synthesis of GMP from XMP. This is GMP synthase [glutamine-hydrolyzing] from Solidesulfovibrio magneticus (strain ATCC 700980 / DSM 13731 / RS-1) (Desulfovibrio magneticus).